Here is a 421-residue protein sequence, read N- to C-terminus: 3-isopropylmalate dehydratase large subunit (421 aa).

Positions 302, 362, and 365 each coordinate [4Fe-4S] cluster.

Belongs to the aconitase/IPM isomerase family. LeuC type 2 subfamily. In terms of assembly, heterodimer of LeuC and LeuD. The cofactor is [4Fe-4S] cluster.

The catalysed reaction is (2R,3S)-3-isopropylmalate = (2S)-2-isopropylmalate. The protein operates within amino-acid biosynthesis; L-leucine biosynthesis; L-leucine from 3-methyl-2-oxobutanoate: step 2/4. In terms of biological role, catalyzes the isomerization between 2-isopropylmalate and 3-isopropylmalate, via the formation of 2-isopropylmaleate. This chain is 3-isopropylmalate dehydratase large subunit, found in Campylobacter fetus subsp. fetus (strain 82-40).